The primary structure comprises 429 residues: Histidine--tRNA ligase (429 aa).

This sequence belongs to the class-II aminoacyl-tRNA synthetase family. As to quaternary structure, homodimer.

Its subcellular location is the cytoplasm. It catalyses the reaction tRNA(His) + L-histidine + ATP = L-histidyl-tRNA(His) + AMP + diphosphate + H(+). This Streptococcus pneumoniae (strain Hungary19A-6) protein is Histidine--tRNA ligase.